The sequence spans 391 residues: Phosphoglycerate kinase (391 aa).

Residues 21-23 (DLN), Arg-36, 59-62 (HLGR), Arg-113, and Arg-146 each bind substrate. ATP-binding positions include Lys-197, Glu-319, and 345–348 (GGDT).

The protein belongs to the phosphoglycerate kinase family. In terms of assembly, monomer.

The protein resides in the cytoplasm. It carries out the reaction (2R)-3-phosphoglycerate + ATP = (2R)-3-phospho-glyceroyl phosphate + ADP. It functions in the pathway carbohydrate degradation; glycolysis; pyruvate from D-glyceraldehyde 3-phosphate: step 2/5. In Stenotrophomonas maltophilia (strain K279a), this protein is Phosphoglycerate kinase.